The following is a 350-amino-acid chain: 3-dehydroquinate synthase (350 aa).

Residues 106–110 (GVIGD), 130–131 (TS), K143, and K152 each bind NAD(+). Positions 185, 246, and 263 each coordinate Zn(2+).

The protein belongs to the sugar phosphate cyclases superfamily. Dehydroquinate synthase family. The cofactor is Co(2+). Zn(2+) is required as a cofactor. NAD(+) serves as cofactor.

It is found in the cytoplasm. It carries out the reaction 7-phospho-2-dehydro-3-deoxy-D-arabino-heptonate = 3-dehydroquinate + phosphate. The protein operates within metabolic intermediate biosynthesis; chorismate biosynthesis; chorismate from D-erythrose 4-phosphate and phosphoenolpyruvate: step 2/7. In terms of biological role, catalyzes the conversion of 3-deoxy-D-arabino-heptulosonate 7-phosphate (DAHP) to dehydroquinate (DHQ). This is 3-dehydroquinate synthase from Clostridium botulinum (strain Alaska E43 / Type E3).